Consider the following 334-residue polypeptide: Protein-glutamate methylesterase/protein-glutamine glutaminase 2 (334 aa).

In terms of domain architecture, Response regulatory spans 2 to 120 (NIGIVNDLPL…GAAGDTTKLL (119 aa)). Residue D53 is modified to 4-aspartylphosphate. The CheB-type methylesterase domain maps to 134–334 (PGSSRLAGAA…AGELAALARI (201 aa)). Residues S157, H184, and D277 contribute to the active site.

The protein belongs to the CheB family. Post-translationally, phosphorylated by CheA. Phosphorylation of the N-terminal regulatory domain activates the methylesterase activity.

The protein resides in the cytoplasm. The catalysed reaction is [protein]-L-glutamate 5-O-methyl ester + H2O = L-glutamyl-[protein] + methanol + H(+). It catalyses the reaction L-glutaminyl-[protein] + H2O = L-glutamyl-[protein] + NH4(+). Involved in chemotaxis. Part of a chemotaxis signal transduction system that modulates chemotaxis in response to various stimuli. Catalyzes the demethylation of specific methylglutamate residues introduced into the chemoreceptors (methyl-accepting chemotaxis proteins or MCP) by CheR. Also mediates the irreversible deamidation of specific glutamine residues to glutamic acid. The chain is Protein-glutamate methylesterase/protein-glutamine glutaminase 2 from Burkholderia orbicola (strain AU 1054).